We begin with the raw amino-acid sequence, 510 residues long: 2,3-bisphosphoglycerate-independent phosphoglycerate mutase (510 aa).

Positions 12 and 62 each coordinate Mn(2+). Ser-62 (phosphoserine intermediate) is an active-site residue. Residues His-123, Arg-153–Asp-154, Arg-185, Arg-191, Arg-260–Arg-263, and Lys-335 each bind substrate. Asp-402, His-406, Asp-443, His-444, and His-461 together coordinate Mn(2+).

The protein belongs to the BPG-independent phosphoglycerate mutase family. Monomer. It depends on Mn(2+) as a cofactor.

The catalysed reaction is (2R)-2-phosphoglycerate = (2R)-3-phosphoglycerate. It participates in carbohydrate degradation; glycolysis; pyruvate from D-glyceraldehyde 3-phosphate: step 3/5. Functionally, catalyzes the interconversion of 2-phosphoglycerate and 3-phosphoglycerate. This is 2,3-bisphosphoglycerate-independent phosphoglycerate mutase from Listeria monocytogenes serovar 1/2a (strain ATCC BAA-679 / EGD-e).